A 207-amino-acid polypeptide reads, in one-letter code: LexA repressor (207 aa).

The segment at residues 28–48 is a DNA-binding region (H-T-H motif); the sequence is VREIGEAVGLASSSTVHGHLS. Catalysis depends on for autocatalytic cleavage activity residues Ser129 and Lys167.

It belongs to the peptidase S24 family. In terms of assembly, homodimer.

It carries out the reaction Hydrolysis of Ala-|-Gly bond in repressor LexA.. Functionally, represses a number of genes involved in the response to DNA damage (SOS response), including recA and lexA. In the presence of single-stranded DNA, RecA interacts with LexA causing an autocatalytic cleavage which disrupts the DNA-binding part of LexA, leading to derepression of the SOS regulon and eventually DNA repair. This is LexA repressor from Halalkalibacterium halodurans (strain ATCC BAA-125 / DSM 18197 / FERM 7344 / JCM 9153 / C-125) (Bacillus halodurans).